A 458-amino-acid chain; its full sequence is NALCN channel auxiliary factor 1 (458 aa).

The chain crosses the membrane as a helical span at residues 40-60 (LSLASLLFFTVLLSDHLWFCA). Residues 70-155 (KEHQQQQRQQ…NRGKDDRGKA (86 aa)) are disordered. The span at 75–96 (QQRQQQQQQQQQRQRQQQQQQR) shows a compositional bias: low complexity. Gly residues predominate over residues 136–145 (GDGGGGGGKG). 7 disulfide bridges follow: C191–C261, C226–C313, C246–C261, C304–C341, C324–C377, C330–C376, and C334–C361. Residue N217 is glycosylated (N-linked (GlcNAc...) asparagine). Residues 417–437 (LKLCVLVLILLHTVLTASAAQ) traverse the membrane as a helical segment.

Belongs to the NALF family. Component of the NALCN channel complex. NALCN complex consists of NALCN and auxiliary subunits, UNC79, UNC80 and NACL1. These auxiliary subunits are essential for the NALCN channel function.

Its subcellular location is the cell membrane. Functionally, auxillary component of the NALCN sodium channel complex, a channel that regulates the resting membrane potential and controls neuronal excitability. The sequence is that of NALCN channel auxiliary factor 1 from Homo sapiens (Human).